The chain runs to 216 residues: Sperm microtubule inner protein 8 (216 aa).

As to quaternary structure, microtubule inner protein component of sperm flagellar doublet microtubules.

Its subcellular location is the cytoplasm. The protein localises to the cytoskeleton. It localises to the flagellum axoneme. In terms of biological role, microtubule inner protein (MIP) part of the dynein-decorated doublet microtubules (DMTs) in flagellum axoneme. May serve to reinforce and thus stabilize the microtubule structure in the sperm flagella. The chain is Sperm microtubule inner protein 8 (Spmip8) from Rattus norvegicus (Rat).